The chain runs to 514 residues: 2,3-bisphosphoglycerate-independent phosphoglycerate mutase (514 aa).

Mn(2+)-binding residues include Asp13 and Ser63. The active-site Phosphoserine intermediate is the Ser63. Residues His124, 154 to 155 (RD), Arg186, Arg192, 258 to 261 (RADR), and Lys332 each bind substrate. Mn(2+) contacts are provided by Asp399, His403, Asp440, His441, and His459.

This sequence belongs to the BPG-independent phosphoglycerate mutase family. In terms of assembly, monomer. Mn(2+) serves as cofactor.

The catalysed reaction is (2R)-2-phosphoglycerate = (2R)-3-phosphoglycerate. It participates in carbohydrate degradation; glycolysis; pyruvate from D-glyceraldehyde 3-phosphate: step 3/5. Functionally, catalyzes the interconversion of 2-phosphoglycerate and 3-phosphoglycerate. The protein is 2,3-bisphosphoglycerate-independent phosphoglycerate mutase of Legionella pneumophila (strain Lens).